A 418-amino-acid chain; its full sequence is Actin-related protein 3 (418 aa).

Belongs to the actin family. ARP3 subfamily. Component of the Arp2/3 complex composed of actr2/arp2, actr3/arp3, arpc1b, arpc2, arpc3, arpc4 and arpc5.

It localises to the cytoplasm. The protein localises to the cytoskeleton. The protein resides in the cell projection. It is found in the nucleus. Functionally, ATP-binding component of the Arp2/3 complex, a multiprotein complex that mediates actin polymerization upon stimulation by nucleation-promoting factor (NPF). The Arp2/3 complex mediates the formation of branched actin networks in the cytoplasm, providing the force for cell motility. Seems to contact the pointed end of the daughter actin filament. In addition to its role in the cytoplasmic cytoskeleton, the Arp2/3 complex also promotes actin polymerization in the nucleus, thereby regulating gene transcription and repair of damaged DNA. The Arp2/3 complex promotes homologous recombination (HR) repair in response to DNA damage by promoting nuclear actin polymerization, leading to drive motility of double-strand breaks (DSBs). This chain is Actin-related protein 3 (actr3), found in Takifugu rubripes (Japanese pufferfish).